A 457-amino-acid polypeptide reads, in one-letter code: Argininosuccinate lyase (457 aa).

This sequence belongs to the lyase 1 family. Argininosuccinate lyase subfamily.

Its subcellular location is the cytoplasm. It catalyses the reaction 2-(N(omega)-L-arginino)succinate = fumarate + L-arginine. It participates in amino-acid biosynthesis; L-arginine biosynthesis; L-arginine from L-ornithine and carbamoyl phosphate: step 3/3. In Yersinia pseudotuberculosis serotype O:3 (strain YPIII), this protein is Argininosuccinate lyase.